The sequence spans 63 residues: uncharacterized protein (63 aa).

The span at 1–15 shows a compositional bias: basic residues; it reads MGRNHIHKNRDKNKQ. The interval 1-63 is disordered; it reads MGRNHIHKNR…ADNRAKKKSR (63 aa). A compositionally biased stretch (acidic residues) spans 30 to 44; that stretch reads GVYEEYSTELADADD. Over residues 45-57 the composition is skewed to basic and acidic residues; sequence REAQERAKAADNR.

This is an uncharacterized protein from Bacillus subtilis (strain 168).